The chain runs to 219 residues: Large ribosomal subunit protein uL1 (219 aa).

Belongs to the universal ribosomal protein uL1 family. Part of the 50S ribosomal subunit.

Binds directly to 23S rRNA. Probably involved in E site tRNA release. Functionally, protein L1 is also a translational repressor protein, it controls the translation of its operon by binding to its mRNA. The protein is Large ribosomal subunit protein uL1 of Pyrococcus abyssi (strain GE5 / Orsay).